The sequence spans 177 residues: O-acetyl-ADP-ribose deacetylase (177 aa).

The Macro domain maps to 1–175 (MKSRIHVQHG…LYERLLTQQG (175 aa)). Substrate is bound by residues 11-12 (DI), N25, 33-35 (GVD), and 122-126 (STGAY). D35 acts as the Proton acceptor in catalysis.

Belongs to the MacroD-type family. YmdB subfamily. In terms of assembly, homodimer. Interacts with RNase III.

It carries out the reaction 3''-O-acetyl-ADP-D-ribose + H2O = ADP-D-ribose + acetate + H(+). The enzyme catalyses 2''-O-acetyl-ADP-D-ribose + H2O = ADP-D-ribose + acetate + H(+). Its function is as follows. Deacetylates O-acetyl-ADP ribose to yield ADP-ribose and free acetate. Down-regulates ribonuclease 3 (RNase III) activity. Acts by interacting directly with the region of the ribonuclease that is required for dimerization/activation. The protein is O-acetyl-ADP-ribose deacetylase of Citrobacter koseri (strain ATCC BAA-895 / CDC 4225-83 / SGSC4696).